The sequence spans 146 residues: 3-hydroxyacyl-[acyl-carrier-protein] dehydratase FabZ (146 aa).

Residue His49 is part of the active site.

This sequence belongs to the thioester dehydratase family. FabZ subfamily.

The protein localises to the cytoplasm. The enzyme catalyses a (3R)-hydroxyacyl-[ACP] = a (2E)-enoyl-[ACP] + H2O. Involved in unsaturated fatty acids biosynthesis. Catalyzes the dehydration of short chain beta-hydroxyacyl-ACPs and long chain saturated and unsaturated beta-hydroxyacyl-ACPs. This is 3-hydroxyacyl-[acyl-carrier-protein] dehydratase FabZ from Pseudomonas syringae pv. tomato (strain ATCC BAA-871 / DC3000).